A 907-amino-acid polypeptide reads, in one-letter code: Protein translocase subunit SecA (907 aa).

ATP is bound by residues glutamine 87, 105–109, and aspartate 511; that span reads GEGKT. Zn(2+)-binding residues include cysteine 891, cysteine 893, cysteine 902, and histidine 903.

This sequence belongs to the SecA family. Monomer and homodimer. Part of the essential Sec protein translocation apparatus which comprises SecA, SecYEG and auxiliary proteins SecDF-YajC and YidC. It depends on Zn(2+) as a cofactor.

The protein resides in the cell inner membrane. It is found in the cytoplasm. It catalyses the reaction ATP + H2O + cellular proteinSide 1 = ADP + phosphate + cellular proteinSide 2.. Its function is as follows. Part of the Sec protein translocase complex. Interacts with the SecYEG preprotein conducting channel. Has a central role in coupling the hydrolysis of ATP to the transfer of proteins into and across the cell membrane, serving both as a receptor for the preprotein-SecB complex and as an ATP-driven molecular motor driving the stepwise translocation of polypeptide chains across the membrane. The protein is Protein translocase subunit SecA of Aromatoleum aromaticum (strain DSM 19018 / LMG 30748 / EbN1) (Azoarcus sp. (strain EbN1)).